The chain runs to 322 residues: Zinc finger C2HC domain-containing protein zchc-1A (322 aa).

2 C2HC/C3H-type zinc fingers span residues 9-38 (PTFP…LASL) and 119-148 (DYVQ…QATR). Positions 13, 16, 28, 32, 123, 126, 138, and 142 each coordinate Zn(2+). Over residues 150–159 (QGGNLKSSGG) the composition is skewed to polar residues. Residues 150-322 (QGGNLKSSGG…SRNNSRSRIF (173 aa)) form a disordered region. Basic and acidic residues predominate over residues 174–220 (NEGKKQESSSRNGSAERKPTTRGRDGSLLRARRDDSNDITSRRKSLD). 2 stretches are compositionally biased toward polar residues: residues 221 to 238 (TRTS…TSLS) and 264 to 274 (LQQSSTPQQRL). Positions 276-295 (TPASTTTTASRSGSRTSSRA) are enriched in low complexity. A compositionally biased stretch (basic and acidic residues) spans 296-305 (CPRDDSRDSR). Over residues 311 to 322 (NNSRNNSRSRIF) the composition is skewed to low complexity.

The protein belongs to the ZC2HC1 family. The cofactor is Zn(2+).

The protein is Zinc finger C2HC domain-containing protein zchc-1A of Caenorhabditis elegans.